A 486-amino-acid chain; its full sequence is Endoglucanase 16 (486 aa).

The first 30 residues, 1–30 (MANYKGRGNVMIRSMLLGLYGIINIVCVNG), serve as a signal peptide directing secretion. Asn29 is a glycosylation site (N-linked (GlcNAc...) asparagine). Catalysis depends on Asp87, which acts as the Nucleophile. Active-site residues include His407, Asp458, and Glu467.

This sequence belongs to the glycosyl hydrolase 9 (cellulase E) family.

The protein localises to the secreted. The catalysed reaction is Endohydrolysis of (1-&gt;4)-beta-D-glucosidic linkages in cellulose, lichenin and cereal beta-D-glucans.. In Arabidopsis thaliana (Mouse-ear cress), this protein is Endoglucanase 16.